A 267-amino-acid polypeptide reads, in one-letter code: Putative phosphoenolpyruvate synthase regulatory protein (267 aa).

147–154 is an ADP binding site; that stretch reads GVSRSGKT.

The protein belongs to the pyruvate, phosphate/water dikinase regulatory protein family. PSRP subfamily.

It catalyses the reaction [pyruvate, water dikinase] + ADP = [pyruvate, water dikinase]-phosphate + AMP + H(+). The enzyme catalyses [pyruvate, water dikinase]-phosphate + phosphate + H(+) = [pyruvate, water dikinase] + diphosphate. Its function is as follows. Bifunctional serine/threonine kinase and phosphorylase involved in the regulation of the phosphoenolpyruvate synthase (PEPS) by catalyzing its phosphorylation/dephosphorylation. The protein is Putative phosphoenolpyruvate synthase regulatory protein of Cupriavidus necator (strain ATCC 17699 / DSM 428 / KCTC 22496 / NCIMB 10442 / H16 / Stanier 337) (Ralstonia eutropha).